Consider the following 578-residue polypeptide: Potassium-transporting ATPase potassium-binding subunit (578 aa).

A run of 10 helical transmembrane segments spans residues 3–23 (NAIL…IPLG), 65–85 (SFSV…LNLL), 134–154 (GLTV…FALI), 175–195 (IVLY…VSQG), 261–281 (FSNL…CFTF), 293–313 (AIFI…GVSE), 397–417 (GLYG…LMVG), 435–455 (AMLI…LASI), 503–523 (IGLI…AIAG), and 543–563 (LLFI…SFFP).

It belongs to the KdpA family. In terms of assembly, the system is composed of three essential subunits: KdpA, KdpB and KdpC.

It is found in the cell membrane. Its function is as follows. Part of the high-affinity ATP-driven potassium transport (or Kdp) system, which catalyzes the hydrolysis of ATP coupled with the electrogenic transport of potassium into the cytoplasm. This subunit binds the extracellular potassium ions and delivers the ions to the membrane domain of KdpB through an intramembrane tunnel. In Clostridium perfringens (strain ATCC 13124 / DSM 756 / JCM 1290 / NCIMB 6125 / NCTC 8237 / Type A), this protein is Potassium-transporting ATPase potassium-binding subunit.